The primary structure comprises 575 residues: Phosphoenolpyruvate-protein phosphotransferase (575 aa).

H189 functions as the Tele-phosphohistidine intermediate in the catalytic mechanism. Phosphoenolpyruvate contacts are provided by R296 and R332. Mg(2+) is bound by residues E431 and D455. Phosphoenolpyruvate contacts are provided by residues 454–455 (ND) and R465. C502 functions as the Proton donor in the catalytic mechanism.

It belongs to the PEP-utilizing enzyme family. In terms of assembly, homodimer. Requires Mg(2+) as cofactor.

Its subcellular location is the cytoplasm. It catalyses the reaction L-histidyl-[protein] + phosphoenolpyruvate = N(pros)-phospho-L-histidyl-[protein] + pyruvate. General (non sugar-specific) component of the phosphoenolpyruvate-dependent sugar phosphotransferase system (sugar PTS). This major carbohydrate active-transport system catalyzes the phosphorylation of incoming sugar substrates concomitantly with their translocation across the cell membrane. Enzyme I transfers the phosphoryl group from phosphoenolpyruvate (PEP) to the phosphoryl carrier protein (HPr). This is Phosphoenolpyruvate-protein phosphotransferase (ptsI) from Haemophilus influenzae (strain ATCC 51907 / DSM 11121 / KW20 / Rd).